A 209-amino-acid chain; its full sequence is MARNLDPKCRQCRREGEKLFLKAEKCFTDKCAIERRAYAPGQHGQRSGQRMSGYGVQLREKQKIRRLYGVLEAQFRKVYAEAERRRGQTGENLLQLLEGRLDSVVYRMGFGGSRAESRQLVRHNGILVNGKRVNIPSYVVRPGDVVELTEGSRGQLRVKAALEAAASRGFPEWLDVDAKAGKGTFKAYPQRAELPPTINEGLVVELYSR.

The region spanning 99–164 is the S4 RNA-binding domain; sequence GRLDSVVYRM…QLRVKAALEA (66 aa).

The protein belongs to the universal ribosomal protein uS4 family. In terms of assembly, part of the 30S ribosomal subunit. Contacts protein S5. The interaction surface between S4 and S5 is involved in control of translational fidelity.

In terms of biological role, one of the primary rRNA binding proteins, it binds directly to 16S rRNA where it nucleates assembly of the body of the 30S subunit. With S5 and S12 plays an important role in translational accuracy. This chain is Small ribosomal subunit protein uS4, found in Aromatoleum aromaticum (strain DSM 19018 / LMG 30748 / EbN1) (Azoarcus sp. (strain EbN1)).